The primary structure comprises 579 residues: Protein PLASTID MOVEMENT IMPAIRED 15 (579 aa).

Coiled coils occupy residues 90-161, 188-216, 383-419, and 481-501; these read EVLK…NEEH, KVLD…IEIE, QKTK…KLES, and LMKT…EERE.

The protein belongs to the WEB family.

In terms of biological role, required for the chloroplast avoidance response under high intensity blue light. This avoidance response consists in the relocation of chloroplasts on the anticlinal side of exposed cells. This chain is Protein PLASTID MOVEMENT IMPAIRED 15 (PMI15), found in Arabidopsis thaliana (Mouse-ear cress).